A 190-amino-acid chain; its full sequence is UPF0340 protein BCE33L5016 (190 aa).

It belongs to the UPF0340 family.

The chain is UPF0340 protein BCE33L5016 from Bacillus cereus (strain ZK / E33L).